The chain runs to 324 residues: Probable peptidylglycine alpha-hydroxylating monooxygenase 1 (324 aa).

The N-terminal stretch at 1–22 (MPRFYLLSSCALLAFATSFCNA) is a signal peptide. 2 disulfides stabilise this stretch: C41/C85 and C73/C101. The Cu cation site is built by H66 and H67. H142 lines the Cu cation pocket. N182 carries N-linked (GlcNAc...) asparagine glycosylation. The Cu cation site is built by H207, H209, and M284. A disulfide bridge connects residues C264 and C285.

It belongs to the copper type II ascorbate-dependent monooxygenase family. The cofactor is Cu(2+).

The protein resides in the secreted. It catalyses the reaction a [peptide]-C-terminal glycine + 2 L-ascorbate + O2 = a [peptide]-C-terminal (2S)-2-hydroxyglycine + 2 monodehydro-L-ascorbate radical + H2O. In terms of biological role, monooxygenase that catalyzes an essential reaction in C-terminal alpha-amidation of peptides. Produces an unstable peptidyl(2-hydroxyglycine) intermediate. C-terminal amidation of peptides such as neuropeptides is essential for full biological activity. The polypeptide is Probable peptidylglycine alpha-hydroxylating monooxygenase 1 (Caenorhabditis elegans).